The primary structure comprises 605 residues: MNIEQLKERQKRIRNFSIIAHIDHGKSTLADRILEFTGTIDKRIMKEQILDSMDLERERGITIKLNAVEINYKSKDGKNYIMHLIDTPGHVDFSYEVSRSLAACEGAILIIDAAQGIQAQTLANVYLAVDNNLTLIPVLNKVDLPSADVPKVKEEIKETLGLDPEQALIASGKTGLGVIDILEQIVTRISPPQGDIQKPLQALIFDSYFDSYKGVVPSIRIVNGTVKKGDQIRFMASNSVYEVVEVGVYNPKQIVKDFLAPGDVGYLTAAIKSINHVRVGDTITSQTNQALLPLPGYKQMNSVVFCGLYPVETNKYDILKEALEKLKLNDSSLIFEPESSNALGLGFRTGFLGLLHMEIIQERISREFGVEVIATAPSVIYHVYSIKGEKLLVDNPSKLPSTQMIDRIEEPFIKATIMCPEIYIGKVMELSQNKRGALQNIEYIDSQRVMINYLLPFSEIIYSYFDKLKSLTKGYASFDYEIDKYRVSKLQKMDILLNGEIVDALSLIVHHDFAYERGKAICETLKEFIPKQMFEIPIQAALGKKIIARQTIKAMRKDVTAKLYGGDVTRKKKLLEKQKKGKKKMKTLGKVQLPQKAFLAILATK.

A tr-type G domain is found at 11–193 (KRIRNFSIIA…QIVTRISPPQ (183 aa)). GTP-binding positions include 23-28 (DHGKST) and 140-143 (NKVD).

This sequence belongs to the TRAFAC class translation factor GTPase superfamily. Classic translation factor GTPase family. LepA subfamily.

It is found in the cell membrane. It catalyses the reaction GTP + H2O = GDP + phosphate + H(+). Functionally, required for accurate and efficient protein synthesis under certain stress conditions. May act as a fidelity factor of the translation reaction, by catalyzing a one-codon backward translocation of tRNAs on improperly translocated ribosomes. Back-translocation proceeds from a post-translocation (POST) complex to a pre-translocation (PRE) complex, thus giving elongation factor G a second chance to translocate the tRNAs correctly. Binds to ribosomes in a GTP-dependent manner. This is Elongation factor 4 from Onion yellows phytoplasma (strain OY-M).